The sequence spans 568 residues: Pentatricopeptide repeat-containing protein At1g73400, mitochondrial (568 aa).

Residues Met-1–Cys-55 constitute a mitochondrion transit peptide. 8 PPR repeats span residues Glu-233–Arg-263, Asp-267–Pro-301, Glu-302–Val-336, Thr-340–Pro-374, Asp-375–Pro-409, Asp-410–Pro-444, Ser-445–Gln-479, and Asp-480–Leu-514.

This sequence belongs to the PPR family. P subfamily.

Its subcellular location is the mitochondrion. This Arabidopsis thaliana (Mouse-ear cress) protein is Pentatricopeptide repeat-containing protein At1g73400, mitochondrial.